The primary structure comprises 167 residues: Endoribonuclease YbeY (167 aa).

Zn(2+) is bound by residues H125, H129, and H135.

Belongs to the endoribonuclease YbeY family. It depends on Zn(2+) as a cofactor.

Its subcellular location is the cytoplasm. In terms of biological role, single strand-specific metallo-endoribonuclease involved in late-stage 70S ribosome quality control and in maturation of the 3' terminus of the 16S rRNA. This chain is Endoribonuclease YbeY, found in Allorhizobium ampelinum (strain ATCC BAA-846 / DSM 112012 / S4) (Agrobacterium vitis (strain S4)).